The chain runs to 199 residues: Acireductone dioxygenase 1 (199 aa).

4 residues coordinate Fe(2+): H99, H101, E105, and H144. The Ni(2+) site is built by H99, H101, E105, and H144.

Belongs to the acireductone dioxygenase (ARD) family. Fe(2+) serves as cofactor. The cofactor is Ni(2+).

Its subcellular location is the cytoplasm. It localises to the nucleus. It carries out the reaction 1,2-dihydroxy-5-(methylsulfanyl)pent-1-en-3-one + O2 = 4-methylsulfanyl-2-oxobutanoate + formate + 2 H(+). The catalysed reaction is 1,2-dihydroxy-5-(methylsulfanyl)pent-1-en-3-one + O2 = 3-(methylsulfanyl)propanoate + CO + formate + 2 H(+). Its pathway is amino-acid biosynthesis; L-methionine biosynthesis via salvage pathway; L-methionine from S-methyl-5-thio-alpha-D-ribose 1-phosphate: step 5/6. Its function is as follows. Catalyzes 2 different reactions between oxygen and the acireductone 1,2-dihydroxy-3-keto-5-methylthiopentene (DHK-MTPene) depending upon the metal bound in the active site. Fe-containing acireductone dioxygenase (Fe-ARD) produces formate and 2-keto-4-methylthiobutyrate (KMTB), the alpha-ketoacid precursor of methionine in the methionine recycle pathway. Ni-containing acireductone dioxygenase (Ni-ARD) produces methylthiopropionate, carbon monoxide and formate, and does not lie on the methionine recycle pathway. This Oryza sativa subsp. indica (Rice) protein is Acireductone dioxygenase 1 (ARD1).